We begin with the raw amino-acid sequence, 696 residues long: L-amino-acid oxidase (696 aa).

The propeptide occupies 1–130; the sequence is MKWSAAAGAA…IKMRRDLKAR (130 aa). Residues Glu-207, Arg-215, 236 to 237, and Val-440 contribute to the FAD site; that span reads MR. Arg-237 serves as a coordination point for substrate. Residue Tyr-564 participates in substrate binding. Residues Glu-649 and 658 to 661 each bind FAD; that span reads IASA.

It belongs to the flavin monoamine oxidase family. Requires FAD as cofactor.

The catalysed reaction is an L-alpha-amino acid + O2 + H2O = a 2-oxocarboxylate + H2O2 + NH4(+). This Neurospora crassa (strain ATCC 24698 / 74-OR23-1A / CBS 708.71 / DSM 1257 / FGSC 987) protein is L-amino-acid oxidase (lox).